The primary structure comprises 524 residues: REH2-associated factor 1 (524 aa).

A mitochondrion-targeting transit peptide spans 1–22 (MRRWLVASMAPQLHQLLQPVRR). Residues 48 to 70 (ASCPACSRVVHMCDMLTHLITAH) form a C2H2-type 1; atypical zinc finger. The C2H2-type 2; atypical zinc-finger motif lies at 121-147 (YMCNWCDRRSDVYATRDKFLKHVADVH). Residues 226–249 (FPCELCNRTFNSEIDLLQHLETRH) form a C2H2-type 4 zinc finger. A C2H2-type 3; atypical zinc finger spans residues 286-312 (VICDLCVSSSKVYKMPSALFSHIRFKH). 4 consecutive C2H2-type zinc fingers follow at residues 334 to 357 (FVCT…NSKH), 376 to 399 (WWCH…QNKH), 406 to 429 (HPCP…SLQH), and 443 to 465 (VKCS…AVKH). Residues 463–524 (VKHHKKDPRA…KTTEVSEVTS (62 aa)) form a disordered region. The segment covering 479 to 500 (APTSASHVAASTSAAVPSEVEA) has biased composition (low complexity).

In terms of assembly, component of the REH2-associated complex (REH2C) composed of helicase REH2, associated factors H2F1 and H2F2, and mRNAs at various editing stages; the formation of the complex is RNA-independent. Within the complex, interacts with REH2; the interaction is direct. Interacts with various editing complexes including the RNA editing core (RECC) complex, the gRNA-binding (GRBC) complex (also known as the MRB1 complex) and the RNA editing mediator (REMC) complex.

Its subcellular location is the mitochondrion. In terms of biological role, plays an important role in mitochondrial mRNA editing by promoting the assembly of the mRNA editosome. Facilitates the recruitment of mRNA to the REH2C complex and promotes the interaction between various editing complexes including REH2C, GRBC, REMC and RECC complexes. In Trypanosoma brucei brucei (strain 927/4 GUTat10.1), this protein is REH2-associated factor 1.